Here is a 545-residue protein sequence, read N- to C-terminus: Carboxylesterase 5A (545 aa).

The N-terminal stretch at 1-28 is a signal peptide; it reads MSGMWVHPGRTLIWALWVLAAVIKGPAA. N86 carries an N-linked (GlcNAc...) (complex) asparagine glycan. A disulfide bridge links C94 with C121. N134 carries N-linked (GlcNAc...) asparagine glycosylation. S226 functions as the Acyl-ester intermediate in the catalytic mechanism. The cysteines at positions 281 and 292 are disulfide-linked. The Charge relay system role is filled by E346. N363 and N443 each carry an N-linked (GlcNAc...) asparagine glycan. The active-site Charge relay system is H454.

It belongs to the type-B carboxylesterase/lipase family. N-glycosylated; contains a fucosylated complex carbohydrate. In terms of tissue distribution, present at high level in urine. Expressed in the kidney proximal straight tubular cells and is secreted from the apical compartment of the cells into the urine (at protein level). In mature cats, it is present at higher level in intact males than in castrated males or in intact or spayed females.

The protein localises to the secreted. It catalyses the reaction a carboxylic ester + H2O = an alcohol + a carboxylate + H(+). Carboxylesterase present at high level in urine that regulates production of felinine, a probable pheromone precursor. Probably acts by hydrolyzing the peptide bond of the felinine precursor 3-methylbutanol cyteinylglycine, producing felinine and glycine in cat urine. This Felis catus (Cat) protein is Carboxylesterase 5A (CES5A).